Here is a 483-residue protein sequence, read N- to C-terminus: uncharacterized protein (483 aa).

The protein resides in the nucleus. Its subcellular location is the mitochondrion. This is an uncharacterized protein from Saccharomyces cerevisiae (strain ATCC 204508 / S288c) (Baker's yeast).